A 149-amino-acid chain; its full sequence is Large ribosomal subunit protein bL9 (149 aa).

The protein belongs to the bacterial ribosomal protein bL9 family.

Binds to the 23S rRNA. The polypeptide is Large ribosomal subunit protein bL9 (Helicobacter pylori (strain P12)).